Here is an 826-residue protein sequence, read N- to C-terminus: Ribonucleases P/MRP protein subunit POP1 (826 aa).

2 disordered regions span residues 1–24 and 49–91; these read MATTANGNSKKRDGGLSSLAPRKI and NKDF…SGGD. A Nuclear localization signal motif is present at residues 58 to 65; that stretch reads KRRRTNSY. Residues 70–79 show a composition bias toward basic residues; sequence AKKRNIKRQK.

Component of nuclear RNase P and RNase MRP ribonucleoproteins. RNase P consists of a catalytic RNA moiety and different protein chains. Several subunits of RNase P are also part of the RNase MRP complex. RNase MRP consists of a catalytic RNA moiety and several protein subunits.

It localises to the nucleus. The protein resides in the nucleolus. Functionally, component of ribonuclease P, a ribonucleoprotein complex that generates mature tRNA molecules by cleaving their 5'-ends. Also a component of the MRP ribonuclease complex, which cleaves pre-rRNA sequences. Required for rRNA maturation, including 5.8S rRNA processing. The protein is Ribonucleases P/MRP protein subunit POP1 of Arabidopsis thaliana (Mouse-ear cress).